The following is a 222-amino-acid chain: Glutathione S-transferase A5 (222 aa).

An N-acetylalanine modification is found at Ala-2. Residues 3–83 (EKPKLHYSNA…YIASKYNLYG (81 aa)) enclose the GST N-terminal domain. Lys-4 is subject to N6-succinyllysine. Glutathione is bound by residues Tyr-9, Arg-45, 54–55 (QV), and 67–68 (QT). The GST C-terminal domain occupies 85–208 (DMKERALIDM…QPGSQRKPPM (124 aa)).

The protein belongs to the GST superfamily. Alpha family. As to quaternary structure, homodimer. In terms of tissue distribution, expression not detected.

It is found in the cytoplasm. The enzyme catalyses RX + glutathione = an S-substituted glutathione + a halide anion + H(+). This chain is Glutathione S-transferase A5 (GSTA5), found in Homo sapiens (Human).